We begin with the raw amino-acid sequence, 481 residues long: Glutamate--tRNA ligase (481 aa).

The 'HIGH' region motif lies at 9–19 (PSPTGNLHIGT). The 'KMSKS' region motif lies at 247–251 (KLSKR). K250 is an ATP binding site.

This sequence belongs to the class-I aminoacyl-tRNA synthetase family. Glutamate--tRNA ligase type 1 subfamily. Monomer.

The protein resides in the cytoplasm. The enzyme catalyses tRNA(Glu) + L-glutamate + ATP = L-glutamyl-tRNA(Glu) + AMP + diphosphate. Its function is as follows. Catalyzes the attachment of glutamate to tRNA(Glu) in a two-step reaction: glutamate is first activated by ATP to form Glu-AMP and then transferred to the acceptor end of tRNA(Glu). The polypeptide is Glutamate--tRNA ligase (Nostoc punctiforme (strain ATCC 29133 / PCC 73102)).